The primary structure comprises 118 residues: uncharacterized protein (118 aa).

The protein belongs to the HesB/IscA family. Ycf83 subfamily.

This is an uncharacterized protein from Synechocystis sp. (strain ATCC 27184 / PCC 6803 / Kazusa).